Here is a 1387-residue protein sequence, read N- to C-terminus: DNA-directed RNA polymerase subunit beta' (1387 aa).

4 residues coordinate Zn(2+): C70, C72, C85, and C88. Residues D461, D463, and D465 each coordinate Mg(2+). 4 residues coordinate Zn(2+): C808, C882, C889, and C892. The interval 1367 to 1387 is disordered; that stretch reads QDEAKGVGQETPRLSGQEAAE.

Belongs to the RNA polymerase beta' chain family. As to quaternary structure, the RNAP catalytic core consists of 2 alpha, 1 beta, 1 beta' and 1 omega subunit. When a sigma factor is associated with the core the holoenzyme is formed, which can initiate transcription. It depends on Mg(2+) as a cofactor. The cofactor is Zn(2+).

It carries out the reaction RNA(n) + a ribonucleoside 5'-triphosphate = RNA(n+1) + diphosphate. Functionally, DNA-dependent RNA polymerase catalyzes the transcription of DNA into RNA using the four ribonucleoside triphosphates as substrates. The polypeptide is DNA-directed RNA polymerase subunit beta' (Granulibacter bethesdensis (strain ATCC BAA-1260 / CGDNIH1)).